The chain runs to 132 residues: Ribonuclease P protein component (132 aa).

The protein belongs to the RnpA family. Consists of a catalytic RNA component (M1 or rnpB) and a protein subunit.

It catalyses the reaction Endonucleolytic cleavage of RNA, removing 5'-extranucleotides from tRNA precursor.. Its function is as follows. RNaseP catalyzes the removal of the 5'-leader sequence from pre-tRNA to produce the mature 5'-terminus. It can also cleave other RNA substrates such as 4.5S RNA. The protein component plays an auxiliary but essential role in vivo by binding to the 5'-leader sequence and broadening the substrate specificity of the ribozyme. The sequence is that of Ribonuclease P protein component from Micrococcus luteus (strain ATCC 4698 / DSM 20030 / JCM 1464 / CCM 169 / CCUG 5858 / IAM 1056 / NBRC 3333 / NCIMB 9278 / NCTC 2665 / VKM Ac-2230) (Micrococcus lysodeikticus).